The following is a 159-amino-acid chain: Transmembrane protein 42 (159 aa).

4 consecutive transmembrane segments (helical) span residues 37–57, 59–79, 100–120, and 124–144; these read FWGV…AASA, LAFG…VMAS, IASV…GYVL, and CQEV…TLIH.

It is found in the membrane. This Homo sapiens (Human) protein is Transmembrane protein 42 (TMEM42).